A 235-amino-acid chain; its full sequence is tRNA pseudouridine synthase B (235 aa).

Aspartate 45 (nucleophile) is an active-site residue.

The protein belongs to the pseudouridine synthase TruB family. Type 1 subfamily.

It catalyses the reaction uridine(55) in tRNA = pseudouridine(55) in tRNA. In terms of biological role, responsible for synthesis of pseudouridine from uracil-55 in the psi GC loop of transfer RNAs. This is tRNA pseudouridine synthase B from Chlamydia felis (strain Fe/C-56) (Chlamydophila felis).